Reading from the N-terminus, the 253-residue chain is FGFR1 oncogene partner 2 homolog (253 aa).

Residues 5 to 104 (IEKALADAKA…SALELIMSKY (100 aa)) adopt a coiled-coil conformation. Ser-140 is subject to Phosphoserine. Positions 160–223 (LERRHLEANQ…LREILQITRE (64 aa)) form a coiled coil. Positions 231–253 (DDASESTSLSALVTNSDLSLRKS) are disordered. A compositionally biased stretch (polar residues) spans 235–253 (ESTSLSALVTNSDLSLRKS).

This sequence belongs to the SIKE family.

The protein localises to the cytoplasm. Functionally, may be involved in wound healing pathway. This chain is FGFR1 oncogene partner 2 homolog (Fgfr1op2), found in Mus musculus (Mouse).